Consider the following 89-residue polypeptide: Large ribosomal subunit protein uL29 (89 aa).

This sequence belongs to the universal ribosomal protein uL29 family.

This is Large ribosomal subunit protein uL29 from Frankia alni (strain DSM 45986 / CECT 9034 / ACN14a).